A 695-amino-acid polypeptide reads, in one-letter code: Nicastrin (695 aa).

An N-terminal signal peptide occupies residues 1-22; sequence MEMRLNAASIWLLILSYGATIA. Over 23 to 654 the chain is Extracellular; that stretch reads QGERTRDKMY…IFLRPSNVHQ (632 aa). N45, N108, N116, N138, N381, N461, N489, N585, and N609 each carry an N-linked (GlcNAc...) asparagine glycan. A helical transmembrane segment spans residues 655–675; it reads VTTLSVGIVVLIISFCLVYII. Residues 676-695 are Cytoplasmic-facing; sequence SSRSEVLFEDLPASNAALFG.

Belongs to the nicastrin family. As to quaternary structure, component of the gamma-secretase complex, a complex composed of a presenilin (Psn) homodimer, nicastrin (Nct), Aph-1 and Pen-2.

The protein localises to the membrane. In terms of biological role, essential subunit of the gamma-secretase complex, an endoprotease complex that catalyzes the intramembrane cleavage of integral membrane proteins such as Notch. It probably represents a stabilizing cofactor required for the assembly of the gamma-secretase complex. This Drosophila melanogaster (Fruit fly) protein is Nicastrin.